A 343-amino-acid polypeptide reads, in one-letter code: Pseudaminic acid synthase (343 aa).

The AFP-like domain maps to Ser-287–Arg-343.

The protein belongs to the pseudaminic acid synthase family. A divalent metal cation is required as a cofactor.

The enzyme catalyses 2,4-diacetamido-2,4,6-trideoxy-beta-L-altrose + phosphoenolpyruvate + H2O = pseudaminate + phosphate. Its function is as follows. Catalyzes the fifth step in the biosynthesis of pseudaminic acid, a sialic-acid-like sugar that is used to modify flagellin. Catalyzes the condensation of phosphoenolpyruvate with 2,4-diacetamido-2,4,6-trideoxy-beta-l-altropyranose, forming pseudaminic acid. This is Pseudaminic acid synthase (pseI) from Campylobacter jejuni subsp. jejuni serotype O:23/36 (strain 81-176).